A 370-amino-acid polypeptide reads, in one-letter code: Gibberellin 3-beta-dioxygenase 2-2 (370 aa).

The Fe2OG dioxygenase domain maps to 205–306 (MTATMHLNWY…RISLGYFLGP (102 aa)). Residues His-229, Asp-231, and His-287 each contribute to the Fe cation site. Arg-297 is a catalytic residue.

The protein belongs to the iron/ascorbate-dependent oxidoreductase family. GA3OX subfamily. It depends on L-ascorbate as a cofactor. Fe cation serves as cofactor.

It catalyses the reaction gibberellin A20 + 2-oxoglutarate + O2 = gibberellin A1 + succinate + CO2. Functionally, converts the inactive gibberellin precursors GA9 and GA20 in the bioactives gibberellins GA4 and GA1. The polypeptide is Gibberellin 3-beta-dioxygenase 2-2 (GA3ox2-2) (Triticum aestivum (Wheat)).